Reading from the N-terminus, the 272-residue chain is 2-dehydro-3-deoxyphosphooctonate aldolase (272 aa).

The protein belongs to the KdsA family.

It is found in the cytoplasm. The enzyme catalyses D-arabinose 5-phosphate + phosphoenolpyruvate + H2O = 3-deoxy-alpha-D-manno-2-octulosonate-8-phosphate + phosphate. The protein operates within carbohydrate biosynthesis; 3-deoxy-D-manno-octulosonate biosynthesis; 3-deoxy-D-manno-octulosonate from D-ribulose 5-phosphate: step 2/3. It functions in the pathway bacterial outer membrane biogenesis; lipopolysaccharide biosynthesis. The sequence is that of 2-dehydro-3-deoxyphosphooctonate aldolase from Geobacter metallireducens (strain ATCC 53774 / DSM 7210 / GS-15).